Here is a 239-residue protein sequence, read N- to C-terminus: MNSNTHAKSSNFHQSELDKFAALANRWWDADGPQKPLHALNPVRLEYVSARLEPAGARVLDVGCGGGLLSESMARLGAQVTAIDLAPELVKVARLHSLESGVQVDYRVQSVEDLAAEQAGSFDAVTCMEMLEHVPDPTAIIRACASLLKPGGKLFLSTLNRTPAAFALAVVGAEYIARLLPKGTHHYKDFIKPAELAAWLRNAGLQLEDVSGMLYEPWRNRARLSSRTEVNYLAYAVKP.

Arg44, Gly63, Asp84, and Met128 together coordinate S-adenosyl-L-methionine.

The protein belongs to the methyltransferase superfamily. UbiG/COQ3 family.

It carries out the reaction a 3-demethylubiquinol + S-adenosyl-L-methionine = a ubiquinol + S-adenosyl-L-homocysteine + H(+). The enzyme catalyses a 3-(all-trans-polyprenyl)benzene-1,2-diol + S-adenosyl-L-methionine = a 2-methoxy-6-(all-trans-polyprenyl)phenol + S-adenosyl-L-homocysteine + H(+). It participates in cofactor biosynthesis; ubiquinone biosynthesis. O-methyltransferase that catalyzes the 2 O-methylation steps in the ubiquinone biosynthetic pathway. This is Ubiquinone biosynthesis O-methyltransferase from Xanthomonas axonopodis pv. citri (strain 306).